A 557-amino-acid chain; its full sequence is Ribonuclease J 2 (557 aa).

Histidine 76, histidine 78, histidine 144, and glutamate 166 together coordinate Zn(2+). Residue 366-370 coordinates substrate; the sequence is HASSH.

Belongs to the metallo-beta-lactamase superfamily. RNA-metabolizing metallo-beta-lactamase-like family. Bacterial RNase J subfamily. As to quaternary structure, homodimer, may be a subunit of the RNA degradosome. The cofactor is Zn(2+).

It localises to the cytoplasm. In terms of biological role, an RNase that has 5'-3' exonuclease and possibly endoonuclease activity. Involved in maturation of rRNA and in some organisms also mRNA maturation and/or decay. The sequence is that of Ribonuclease J 2 from Staphylococcus epidermidis (strain ATCC 35984 / DSM 28319 / BCRC 17069 / CCUG 31568 / BM 3577 / RP62A).